We begin with the raw amino-acid sequence, 85 residues long: ATP synthase subunit c (85 aa).

The next 2 membrane-spanning stretches (helical) occupy residues 19 to 39 (LGAA…IGKI) and 62 to 82 (IIAA…CLLV).

This sequence belongs to the ATPase C chain family. In terms of assembly, F-type ATPases have 2 components, F(1) - the catalytic core - and F(0) - the membrane proton channel. F(1) has five subunits: alpha(3), beta(3), gamma(1), delta(1), epsilon(1). F(0) has three main subunits: a(1), b(2) and c(10-14). The alpha and beta chains form an alternating ring which encloses part of the gamma chain. F(1) is attached to F(0) by a central stalk formed by the gamma and epsilon chains, while a peripheral stalk is formed by the delta and b chains.

It is found in the cell inner membrane. Its function is as follows. F(1)F(0) ATP synthase produces ATP from ADP in the presence of a proton or sodium gradient. F-type ATPases consist of two structural domains, F(1) containing the extramembraneous catalytic core and F(0) containing the membrane proton channel, linked together by a central stalk and a peripheral stalk. During catalysis, ATP synthesis in the catalytic domain of F(1) is coupled via a rotary mechanism of the central stalk subunits to proton translocation. Key component of the F(0) channel; it plays a direct role in translocation across the membrane. A homomeric c-ring of between 10-14 subunits forms the central stalk rotor element with the F(1) delta and epsilon subunits. This is ATP synthase subunit c from Bacteroides fragilis (strain ATCC 25285 / DSM 2151 / CCUG 4856 / JCM 11019 / LMG 10263 / NCTC 9343 / Onslow / VPI 2553 / EN-2).